Reading from the N-terminus, the 98-residue chain is UPF0235 protein APJL_1398 (98 aa).

Belongs to the UPF0235 family.

The chain is UPF0235 protein APJL_1398 from Actinobacillus pleuropneumoniae serotype 3 (strain JL03).